Here is a 504-residue protein sequence, read N- to C-terminus: Glycerol kinase (504 aa).

T16 is an ADP binding site. ATP is bound by residues T16 and T17. T16 contacts sn-glycerol 3-phosphate. Position 20 (R20) interacts with ADP. Sn-glycerol 3-phosphate-binding residues include R86, E87, Y138, and D247. Positions 86, 87, 138, 247, and 248 each coordinate glycerol. T269 and G316 together coordinate ADP. 4 residues coordinate ATP: T269, G316, Q320, and G417. Residues G417 and N421 each contribute to the ADP site.

It belongs to the FGGY kinase family.

The catalysed reaction is glycerol + ATP = sn-glycerol 3-phosphate + ADP + H(+). The protein operates within polyol metabolism; glycerol degradation via glycerol kinase pathway; sn-glycerol 3-phosphate from glycerol: step 1/1. Inhibited by fructose 1,6-bisphosphate (FBP). Its function is as follows. Key enzyme in the regulation of glycerol uptake and metabolism. Catalyzes the phosphorylation of glycerol to yield sn-glycerol 3-phosphate. The chain is Glycerol kinase from Trichodesmium erythraeum (strain IMS101).